We begin with the raw amino-acid sequence, 626 residues long: Acetolactate synthase large subunit (626 aa).

A compositionally biased stretch (polar residues) spans 1 to 13 (MNVAASQQPTPAT). The interval 1 to 23 (MNVAASQQPTPATVASRGRSAAP) is disordered. Glu73 provides a ligand contact to thiamine diphosphate. Residues Arg175, 281-302 (HGTV…IGSR), and 324-343 (DIDP…IVGD) contribute to the FAD site. The interval 416-496 (QHQMWAAQFV…IKIALINNGN (81 aa)) is thiamine pyrophosphate binding. Mg(2+) contacts are provided by Asp467 and Asn494.

It belongs to the TPP enzyme family. Dimer of large and small chains. Requires Mg(2+) as cofactor. Thiamine diphosphate is required as a cofactor.

The catalysed reaction is 2 pyruvate + H(+) = (2S)-2-acetolactate + CO2. It participates in amino-acid biosynthesis; L-isoleucine biosynthesis; L-isoleucine from 2-oxobutanoate: step 1/4. It functions in the pathway amino-acid biosynthesis; L-valine biosynthesis; L-valine from pyruvate: step 1/4. This Corynebacterium glutamicum (strain ATCC 13032 / DSM 20300 / JCM 1318 / BCRC 11384 / CCUG 27702 / LMG 3730 / NBRC 12168 / NCIMB 10025 / NRRL B-2784 / 534) protein is Acetolactate synthase large subunit (ilvB).